Consider the following 550-residue polypeptide: Dihydroxy-acid dehydratase (550 aa).

D78 contacts Mg(2+). [2Fe-2S] cluster is bound at residue C119. The Mg(2+) site is built by D120 and K121. An N6-carboxylysine modification is found at K121. A [2Fe-2S] cluster-binding site is contributed by C191. E440 contributes to the Mg(2+) binding site. Catalysis depends on S466, which acts as the Proton acceptor.

Belongs to the IlvD/Edd family. As to quaternary structure, homodimer. Requires [2Fe-2S] cluster as cofactor. Mg(2+) serves as cofactor.

It carries out the reaction (2R)-2,3-dihydroxy-3-methylbutanoate = 3-methyl-2-oxobutanoate + H2O. It catalyses the reaction (2R,3R)-2,3-dihydroxy-3-methylpentanoate = (S)-3-methyl-2-oxopentanoate + H2O. Its pathway is amino-acid biosynthesis; L-isoleucine biosynthesis; L-isoleucine from 2-oxobutanoate: step 3/4. It participates in amino-acid biosynthesis; L-valine biosynthesis; L-valine from pyruvate: step 3/4. Its function is as follows. Functions in the biosynthesis of branched-chain amino acids. Catalyzes the dehydration of (2R,3R)-2,3-dihydroxy-3-methylpentanoate (2,3-dihydroxy-3-methylvalerate) into 2-oxo-3-methylpentanoate (2-oxo-3-methylvalerate) and of (2R)-2,3-dihydroxy-3-methylbutanoate (2,3-dihydroxyisovalerate) into 2-oxo-3-methylbutanoate (2-oxoisovalerate), the penultimate precursor to L-isoleucine and L-valine, respectively. This chain is Dihydroxy-acid dehydratase, found in Methanococcus maripaludis (strain C6 / ATCC BAA-1332).